Reading from the N-terminus, the 234-residue chain is Sugar fermentation stimulation protein homolog (234 aa).

Belongs to the SfsA family.

The sequence is that of Sugar fermentation stimulation protein homolog from Bartonella quintana (strain Toulouse) (Rochalimaea quintana).